The primary structure comprises 282 residues: 4-diphosphocytidyl-2-C-methyl-D-erythritol kinase (282 aa).

Lys11 is a catalytic residue. ATP is bound at residue 93 to 103; the sequence is LVSAGLAGGSA. The active site involves Asp133.

The protein belongs to the GHMP kinase family. IspE subfamily.

It carries out the reaction 4-CDP-2-C-methyl-D-erythritol + ATP = 4-CDP-2-C-methyl-D-erythritol 2-phosphate + ADP + H(+). Its pathway is isoprenoid biosynthesis; isopentenyl diphosphate biosynthesis via DXP pathway; isopentenyl diphosphate from 1-deoxy-D-xylulose 5-phosphate: step 3/6. Its function is as follows. Catalyzes the phosphorylation of the position 2 hydroxy group of 4-diphosphocytidyl-2C-methyl-D-erythritol. The polypeptide is 4-diphosphocytidyl-2-C-methyl-D-erythritol kinase (Ehrlichia chaffeensis (strain ATCC CRL-10679 / Arkansas)).